A 579-amino-acid chain; its full sequence is Alpha-glucosidase (579 aa).

The active-site Nucleophile is Asp212. Glu269 functions as the Proton donor in the catalytic mechanism.

It belongs to the glycosyl hydrolase 13 family.

The enzyme catalyses Hydrolysis of terminal, non-reducing (1-&gt;4)-linked alpha-D-glucose residues with release of alpha-D-glucose.. The polypeptide is Alpha-glucosidase (mal1) (Schizosaccharomyces pombe (strain 972 / ATCC 24843) (Fission yeast)).